The primary structure comprises 611 residues: Fatty acid photodecarboxylase, chloroplastic (611 aa).

A disordered region spans residues Met-1 to Ala-22. Residues Met-1–Ala-36 constitute a chloroplast transit peptide. Residues Thr-55 to Ala-56, Glu-76, Met-125, Ser-129, and Asn-133 to Leu-136 contribute to the FAD site. The hexadecanoate site is built by Cys-392, Arg-412, Tyr-427, and Gln-447. Residue Gly-582 coordinates FAD.

This sequence belongs to the GMC oxidoreductase family. It depends on FAD as a cofactor.

Its subcellular location is the plastid. The protein resides in the chloroplast. The enzyme catalyses a long-chain fatty acid + hnu + H(+) = a long-chain alkane + CO2. The catalysed reaction is hnu + hexadecanoate + H(+) = pentadecane + CO2. Its activity is regulated as follows. Activated by blue light and repressed by red light. Functionally, catalyzes the decarboxylation of free fatty acids to n-alkanes or n-alkenes in response to blue light. Substrate preference is toward fatty acids with C17 or C18 chains. Saturated fatty acids are converted to alkanes, not alkenes. The decarboxylation is initiated through electron abstraction from the fatty acid by the photo-excited FAD. The polypeptide is Fatty acid photodecarboxylase, chloroplastic (Chlamydomonas reinhardtii (Chlamydomonas smithii)).